Consider the following 193-residue polypeptide: UPF0301 protein Bfl251 (193 aa).

Belongs to the UPF0301 (AlgH) family.

In Blochmanniella floridana, this protein is UPF0301 protein Bfl251.